Consider the following 137-residue polypeptide: Large ribosomal subunit protein uL16 (137 aa).

Belongs to the universal ribosomal protein uL16 family. In terms of assembly, part of the 50S ribosomal subunit.

Its function is as follows. Binds 23S rRNA and is also seen to make contacts with the A and possibly P site tRNAs. The protein is Large ribosomal subunit protein uL16 of Methylorubrum extorquens (strain CM4 / NCIMB 13688) (Methylobacterium extorquens).